The following is a 159-amino-acid chain: MTSRLARLWQPGNPQRRVFLPDFWMAVIESPSVGRNKLPRNCVKFEVDPRMSRHDIREYLTKIYDLPVRDVRTEVQMGDITWNTKLDHQYKKAMWKEEDKKIAYVFMSKDFAFSFPQMFAASEEVVELAKMTKQQEELKEKLNEQYANRNRRVGQFLAA.

It belongs to the universal ribosomal protein uL23 family. As to quaternary structure, component of the mitochondrial ribosome large subunit (39S) which comprises a 16S rRNA and about 50 distinct proteins.

It localises to the mitochondrion. This chain is Large ribosomal subunit protein uL23m (mrpl-23), found in Caenorhabditis briggsae.